Consider the following 361-residue polypeptide: Transcription factor MafA (361 aa).

The residue at position 14 (Ser-14) is a Phosphoserine. Lys-32 participates in a covalent cross-link: Glycyl lysine isopeptide (Lys-Gly) (interchain with G-Cter in SUMO2). Disordered regions lie at residues 40–105 (RFCH…VGGA) and 175–228 (GGAD…AGHH). A compositionally biased stretch (low complexity) spans 46–76 (PPGSLSSTPLSTPCSSVPSSPSFCAPSPGTG). Ser-49 carries the post-translational modification Phosphoserine. Phosphothreonine is present on residues Thr-53 and Thr-57. 2 positions are modified to phosphoserine: Ser-61 and Ser-65. Residues 183–211 (GHHHGAHHTAHHHHSAHHHHHHHHHHGGS) show a composition bias toward basic residues. Over residues 212 to 226 (GHHGGGAGHGGGGAG) the composition is skewed to gly residues. A basic motif region spans residues 262 to 287 (RLKQKRRTLKNRGYAQSCRFKRVQQR). Residues 262 to 325 (RLKQKRRTLK…DLYKEKYEKL (64 aa)) form the bZIP domain. Residues 290 to 311 (LESEKCQLQSQVEQLKLEVGRL) are leucine-zipper. The segment at 324–361 (KLAGRGGPGGAGGAGFPREPSPAQAGPGAAKGAPDFFL) is disordered. Over residues 327–338 (GRGGPGGAGGAG) the composition is skewed to gly residues. Residues 345–361 (PAQAGPGAAKGAPDFFL) show a composition bias toward low complexity.

Belongs to the bZIP family. As to quaternary structure, forms homodimers. Monomers and dimers are able to bind DNA, but the off-rate is faster for monomers. Interacts with NEUROD1 and PDX1. May interact with MAFB, FOS, JUN and PCAF. In terms of processing, ubiquitinated, leading to its degradation by the proteasome. Post-translationally, phosphorylated at tyrosines.

The protein localises to the nucleus. Its function is as follows. Transcription factor that activates insulin gene expression. Acts synergistically with NEUROD1/BETA2 and PDX1. Binds the insulin enhancer C1/RIPE3b element. Binds to consensus TRE-type MARE 5'-TGCTGACTCAGCA-3' DNA sequence. This chain is Transcription factor MafA (Mafa), found in Rattus norvegicus (Rat).